The primary structure comprises 433 residues: ATP-dependent protease ATPase subunit HslU (433 aa).

ATP contacts are provided by residues I18, 60 to 65 (GVGKTE), D246, E311, and R383.

It belongs to the ClpX chaperone family. HslU subfamily. A double ring-shaped homohexamer of HslV is capped on each side by a ring-shaped HslU homohexamer. The assembly of the HslU/HslV complex is dependent on binding of ATP.

It is found in the cytoplasm. Functionally, ATPase subunit of a proteasome-like degradation complex; this subunit has chaperone activity. The binding of ATP and its subsequent hydrolysis by HslU are essential for unfolding of protein substrates subsequently hydrolyzed by HslV. HslU recognizes the N-terminal part of its protein substrates and unfolds these before they are guided to HslV for hydrolysis. This Cereibacter sphaeroides (strain KD131 / KCTC 12085) (Rhodobacter sphaeroides) protein is ATP-dependent protease ATPase subunit HslU.